Consider the following 121-residue polypeptide: Large ribosomal subunit protein uL18 (121 aa).

It belongs to the universal ribosomal protein uL18 family. In terms of assembly, part of the 50S ribosomal subunit; part of the 5S rRNA/L5/L18/L25 subcomplex. Contacts the 5S and 23S rRNAs.

This is one of the proteins that bind and probably mediate the attachment of the 5S RNA into the large ribosomal subunit, where it forms part of the central protuberance. In Herpetosiphon aurantiacus (strain ATCC 23779 / DSM 785 / 114-95), this protein is Large ribosomal subunit protein uL18.